A 1613-amino-acid chain; its full sequence is NAD-specific glutamate dehydrogenase (1613 aa).

K849 is an active-site residue.

The protein belongs to the Glu/Leu/Phe/Val dehydrogenases family.

It carries out the reaction L-glutamate + NAD(+) + H2O = 2-oxoglutarate + NH4(+) + NADH + H(+). Involved in arginine catabolism by converting L-glutamate, into 2-oxoglutarate, which is then channeled into the tricarboxylic acid cycle. In Halomonas elongata (strain ATCC 33173 / DSM 2581 / NBRC 15536 / NCIMB 2198 / 1H9), this protein is NAD-specific glutamate dehydrogenase.